The primary structure comprises 382 residues: Anhydro-N-acetylmuramic acid kinase (382 aa).

Residue 22–29 (GTSMDGVD) coordinates ATP.

Belongs to the anhydro-N-acetylmuramic acid kinase family.

The enzyme catalyses 1,6-anhydro-N-acetyl-beta-muramate + ATP + H2O = N-acetyl-D-muramate 6-phosphate + ADP + H(+). Its pathway is amino-sugar metabolism; 1,6-anhydro-N-acetylmuramate degradation. The protein operates within cell wall biogenesis; peptidoglycan recycling. Its function is as follows. Catalyzes the specific phosphorylation of 1,6-anhydro-N-acetylmuramic acid (anhMurNAc) with the simultaneous cleavage of the 1,6-anhydro ring, generating MurNAc-6-P. Is required for the utilization of anhMurNAc either imported from the medium or derived from its own cell wall murein, and thus plays a role in cell wall recycling. The protein is Anhydro-N-acetylmuramic acid kinase of Burkholderia vietnamiensis (strain G4 / LMG 22486) (Burkholderia cepacia (strain R1808)).